Reading from the N-terminus, the 259-residue chain is Thiazole synthase (259 aa).

The active-site Schiff-base intermediate with DXP is the Lys-100. 1-deoxy-D-xylulose 5-phosphate is bound by residues Gly-161, 187 to 188 (AG), and 209 to 210 (AS).

It belongs to the ThiG family. Homotetramer. Forms heterodimers with either ThiH or ThiS.

The protein resides in the cytoplasm. It catalyses the reaction [ThiS sulfur-carrier protein]-C-terminal-Gly-aminoethanethioate + 2-iminoacetate + 1-deoxy-D-xylulose 5-phosphate = [ThiS sulfur-carrier protein]-C-terminal Gly-Gly + 2-[(2R,5Z)-2-carboxy-4-methylthiazol-5(2H)-ylidene]ethyl phosphate + 2 H2O + H(+). It functions in the pathway cofactor biosynthesis; thiamine diphosphate biosynthesis. Its function is as follows. Catalyzes the rearrangement of 1-deoxy-D-xylulose 5-phosphate (DXP) to produce the thiazole phosphate moiety of thiamine. Sulfur is provided by the thiocarboxylate moiety of the carrier protein ThiS. In vitro, sulfur can be provided by H(2)S. The sequence is that of Thiazole synthase from Salinispora arenicola (strain CNS-205).